Here is a 753-residue protein sequence, read N- to C-terminus: Polyribonucleotide nucleotidyltransferase (753 aa).

Mg(2+) contacts are provided by D488 and D494. The KH domain maps to 555-614 (PRLLRTKISPDKIGALIGPGGKNIRGIQETTGAVIEVDDEGTVLVASSNKESAQEAMRQV). Residues 624–692 (GKIYDGTVSS…EHDRVKLSRR (69 aa)) enclose the S1 motif domain. Residues 698–719 (LGEEDPLAVEGEGGGDSEGGGD) show a composition bias toward acidic residues. The segment at 698-753 (LGEEDPLAVEGEGGGDSEGGGDGEDRPRRRRGGSGGGGGGGRGRGPRRSGGGRDRD) is disordered. Residues 730–740 (GSGGGGGGGRG) show a composition bias toward gly residues.

The protein belongs to the polyribonucleotide nucleotidyltransferase family. The cofactor is Mg(2+).

Its subcellular location is the cytoplasm. The catalysed reaction is RNA(n+1) + phosphate = RNA(n) + a ribonucleoside 5'-diphosphate. Involved in mRNA degradation. Catalyzes the phosphorolysis of single-stranded polyribonucleotides processively in the 3'- to 5'-direction. The chain is Polyribonucleotide nucleotidyltransferase from Rhodopirellula baltica (strain DSM 10527 / NCIMB 13988 / SH1).